An 87-amino-acid polypeptide reads, in one-letter code: Probable Fe(2+)-trafficking protein (87 aa).

The protein belongs to the Fe(2+)-trafficking protein family.

Functionally, could be a mediator in iron transactions between iron acquisition and iron-requiring processes, such as synthesis and/or repair of Fe-S clusters in biosynthetic enzymes. The polypeptide is Probable Fe(2+)-trafficking protein (Francisella tularensis subsp. novicida (strain U112)).